A 595-amino-acid polypeptide reads, in one-letter code: Putative capsid protein V20 (595 aa).

The protein resides in the virion. In terms of biological role, may self assemble to form an icosahedral capsid. Most abundant protein in the virion. This Sputnik virophage protein is Putative capsid protein V20.